Consider the following 199-residue polypeptide: Protein GrpE (199 aa).

A disordered region spans residues 1–50 (MAKKSTRTTPEDSQASTTDSAATSTASEATQAATSATDDQAEQTTAVDPT). Residues 11-46 (EDSQASTTDSAATSTASEATQAATSATDDQAEQTTA) are compositionally biased toward low complexity.

The protein belongs to the GrpE family. Homodimer.

It is found in the cytoplasm. In terms of biological role, participates actively in the response to hyperosmotic and heat shock by preventing the aggregation of stress-denatured proteins, in association with DnaK and GrpE. It is the nucleotide exchange factor for DnaK and may function as a thermosensor. Unfolded proteins bind initially to DnaJ; upon interaction with the DnaJ-bound protein, DnaK hydrolyzes its bound ATP, resulting in the formation of a stable complex. GrpE releases ADP from DnaK; ATP binding to DnaK triggers the release of the substrate protein, thus completing the reaction cycle. Several rounds of ATP-dependent interactions between DnaJ, DnaK and GrpE are required for fully efficient folding. The protein is Protein GrpE of Lactiplantibacillus plantarum (strain ATCC BAA-793 / NCIMB 8826 / WCFS1) (Lactobacillus plantarum).